A 726-amino-acid chain; its full sequence is MKSKERKSRKRWITDWWPNRLNLKILRQNCSDSNPYGSDYDYLKEVKTLDVDAVIEDLKKLMKTSQDWWPADFGHYGPLFIRLSWHSAGSYRIHDGRGGAKNGSIRFPARINWPDNINLDKAIRLLWPIKKKYGKKLSWADLIILAGTVALQDMGVKILGFSLGREDVFEADESPDWGAEQEMLSGKERFKEGELEKPFAATEMGLIYVNPEGPMGNPDPSGSAKEIRLAFTRMGMNDEETVALIAGGHSFGKCHGAGPSKDLGPDPSSSPIEQMGLGWKYTYKTGKASDTYTSGFEVIWSSKPTKFGIQYLKFLLEFEWELEKSPDGKNQWVAKNAPEMIPDPFDPNKKHKPRMLTADLALKFDPIYSKIAKKFLENPEEFEKAFAWAWFKLTHRDMGPKSCYIGPYVPREEFIWQDPLPKRDYELIDEEDIEYLKKQILNSGINISQLVYTAWSSASTYRDSDRRGGANGARIRLRPMNLWEVNHPDDLIKIIKVYEKIQKNFNEEQKNNKKVSIADLIVLGGCAAIESAAKKAGFDIRVPFIPGRVDALQDQVEEEFYREIEPFADGFRNYFKDPYKIDESDISTTPEYFLIDKAQLLKLTVPELVVIVGGLRVLGAVYSYKNYGVLTHTVGTLTNDFFVNLLDMNIEWKQIDEHRYLFEGFNRKTKEPEFKATRVDLIFAHHDELRAVAEVYASDDEKEKFVSDFIKTWDKVMTLDRFDLKV.

Residues 85–208 constitute a cross-link (tryptophyl-tyrosyl-methioninium (Trp-Tyr) (with M-234)); sequence WHSAGSYRIH…FAATEMGLIY (124 aa). His-86 serves as the catalytic Proton acceptor. Positions 208–234 form a cross-link, tryptophyl-tyrosyl-methioninium (Tyr-Met) (with W-85); it reads YVNPEGPMGNPDPSGSAKEIRLAFTRM. Position 249 (His-249) interacts with heme b.

This sequence belongs to the peroxidase family. Peroxidase/catalase subfamily. As to quaternary structure, homodimer or homotetramer. The cofactor is heme b. Post-translationally, formation of the three residue Trp-Tyr-Met cross-link is important for the catalase, but not the peroxidase activity of the enzyme.

It catalyses the reaction H2O2 + AH2 = A + 2 H2O. The enzyme catalyses 2 H2O2 = O2 + 2 H2O. Bifunctional enzyme with both catalase and broad-spectrum peroxidase activity. The polypeptide is Catalase-peroxidase (Pseudothermotoga lettingae (strain ATCC BAA-301 / DSM 14385 / NBRC 107922 / TMO) (Thermotoga lettingae)).